We begin with the raw amino-acid sequence, 179 residues long: MRRPNKAPPAASKDGPRINDDIRNAQIQLIDQTGDNKGTVETVVAIKMAQEAGMDLVEISPNTSPPVCKIMDYGKYKYSAQKKAAEARKRQKTVEIKEIKLRPMIDDHDYDVKMRAMQRFFEEGDKVKITLRYRGREMAHQEIGTKLLDKIKTDVAELAKVEQDARFEGRQVVMVLAPR.

The protein belongs to the IF-3 family. As to quaternary structure, monomer.

Its subcellular location is the cytoplasm. Functionally, IF-3 binds to the 30S ribosomal subunit and shifts the equilibrium between 70S ribosomes and their 50S and 30S subunits in favor of the free subunits, thus enhancing the availability of 30S subunits on which protein synthesis initiation begins. The protein is Translation initiation factor IF-3 of Bradyrhizobium diazoefficiens (strain JCM 10833 / BCRC 13528 / IAM 13628 / NBRC 14792 / USDA 110).